Consider the following 347-residue polypeptide: Tsukushi (347 aa).

An N-terminal signal peptide occupies residues 1–19; sequence MASLLCLFFSLLGLAAIGA. Residues 20 to 61 form the LRRNT domain; the sequence is VKNCHPQCRCEVETFGLFDSFSLTKVDCSRIGPGNTPVPIPL. LRR repeat units lie at residues 62–83, 88–109, 112–133, 135–156, 160–175, 185–205, 206–227, 230–252, 255–277, and 280–301; these read DTSH…MLSG, TLVS…AFSK, YLET…CFTG, PLVE…LFTT, DLPI…LTSI, YIKS…LNGI, PLQY…AFDS, ELVH…AFRS, NLQA…VFSG, and SLQE…VFMQ. Asn-285 is a glycosylation site (N-linked (GlcNAc...) asparagine).

As to quaternary structure, forms a ternary complex with chordin/CHRD and BMP4.

The protein localises to the secreted. Functionally, contributes to various developmental events through its interactions with multiple signaling pathways. Dorsalizing factor which functions as an inhibitor of bone morphogenetic proteins during gastrulation. The polypeptide is Tsukushi (tsku) (Danio rerio (Zebrafish)).